The following is a 261-amino-acid chain: Ice-binding protein (261 aa).

Positions 1–20 (MSLLSIITIGLAGLGGLVNG) are cleaved as a signal peptide. The N-linked (GlcNAc...) asparagine glycan is linked to asparagine 185.

Belongs to the ice-binding protein family. Homodimer. Dimerization is not required for the thermal hysteresis (TH) activity. Glycosylated. Glycosylation is not required for the thermal hysteresis (TH) activity. Glycosylation may increase stability and secretion of this protein.

It is found in the secreted. Functionally, confers freeze tolerance. Binds to the surface of ice crystals and inhibits their growth. Has low thermal hysteresis (TH) activity, which is the ability to lower the freezing point of an aqueous solution below its melting point. The TH activity of this protein is approximately 0.2 degrees Celsius at 50 uM and 0.3 degrees Celsius at 400 uM. In Leucosporidium sp. (strain AY30) (Arctic yeast), this protein is Ice-binding protein.